We begin with the raw amino-acid sequence, 274 residues long: Pyrroline-5-carboxylate reductase 3 (274 aa).

It belongs to the pyrroline-5-carboxylate reductase family. In terms of assembly, homodecamer; composed of 5 homodimers.

Its subcellular location is the cytoplasm. The enzyme catalyses L-proline + NADP(+) = (S)-1-pyrroline-5-carboxylate + NADPH + 2 H(+). The catalysed reaction is L-proline + NAD(+) = (S)-1-pyrroline-5-carboxylate + NADH + 2 H(+). The protein operates within amino-acid biosynthesis; L-proline biosynthesis; L-proline from L-glutamate 5-semialdehyde: step 1/1. Its function is as follows. Oxidoreductase that catalyzes the last step in proline biosynthesis, which corresponds to the reduction of pyrroline-5-carboxylate (P5C) to L-proline using NAD(P)H. Proline is synthesized from either glutamate or ornithine; both are converted to P5C, and then to proline via pyrroline-5-carboxylate reductases (PYCRs). PYCR3 is exclusively linked to the biosynthesis of proline from ornithine. This chain is Pyrroline-5-carboxylate reductase 3, found in Xenopus laevis (African clawed frog).